A 535-amino-acid polypeptide reads, in one-letter code: Triacylglyceride transporter MHAS_02168/C731_2106 (535 aa).

The Cytoplasmic segment spans residues 1–18; sequence MAFPQTPNRLIRPRRTSR. The helical transmembrane segment at 19–39 threads the bilayer; sequence GIAISAGGLAVLLGALDTYVV. Over 40–60 the chain is Periplasmic; that stretch reads VSIVTDIMRDVGIAVNQIQRV. A helical transmembrane segment spans residues 61–82; that stretch reads TPIITGYLLGYIAAMPLLGRAS. The Cytoplasmic portion of the chain corresponds to 83 to 86; it reads DRFG. The chain crosses the membrane as a helical span at residues 87 to 107; that stretch reads RKLLIQISLAGFALGSVITAL. Residues 108–111 are Periplasmic-facing; sequence ATNL. The chain crosses the membrane as a helical span at residues 112–136; sequence DVLVAGRVIQGAASGALLPVTLALA. The Cytoplasmic portion of the chain corresponds to 137-145; the sequence is ADLWATHKR. A helical transmembrane segment spans residues 146-167; sequence AAVLGGVGAAQELGAVLGPIYG. Topologically, residues 168 to 177 are periplasmic; the sequence is IFVVWLFHHW. Residues 178–198 traverse the membrane as a helical segment; the sequence is QAVFWVNVPLALIAMVLIHIS. The Cytoplasmic portion of the chain corresponds to 199-212; that stretch reads LPPRVRTEEPQRVD. The chain crosses the membrane as a helical span at residues 213-230; the sequence is VTGGLLLALALGLATIGL. The Periplasmic portion of the chain corresponds to 231–243; it reads YNAEPDGKQVLPE. A helical membrane pass occupies residues 244–263; that stretch reads YGPPLIIGAVIAAVAFLVWE. The Cytoplasmic portion of the chain corresponds to 264–278; it reads RFARTRLLDPAGVRF. The chain crosses the membrane as a helical span at residues 279 to 300; it reads RPFLIALLVSLVTGGALMVTLV. Residues 301-320 lie on the Periplasmic side of the membrane; the sequence is NVELFGQGVLGLDQDEAVFL. Transmembrane regions (helical) follow at residues 321–343 and 344–364; these read LARF…TRVG and DRAV…LIAQ. The Periplasmic segment spans residues 365–384; the sequence is WPADVLESRHDLGFVSLPTL. Residues 373 to 382 are beta-hairpin; it reads RHDLGFVSLP. A helical transmembrane segment spans residues 385-407; that stretch reads DTDLAIAGFGLGLVIAPLTSAAL. The Cytoplasmic segment spans residues 408 to 415; that stretch reads RVVPAAQH. A helical transmembrane segment spans residues 416-440; it reads GIASAAVVVARMIGMLIGIAALSAW. Topologically, residues 441–487 are periplasmic; that stretch reads GLYRFNQYLKEQLAALPPAPADFPGGQMAGQMMRLRTATVQAYVLQY. Residues 488-507 traverse the membrane as a helical segment; that stretch reads GEIFAITAGLCVFGAVLGLF. Topologically, residues 508–535 are cytoplasmic; sequence IAGRREHAEESADAVDGVSNARDRAPSA.

The protein belongs to the major facilitator superfamily. P55 (TC 2.A.1.3.34) family.

It is found in the cell inner membrane. In association with lipoprotein LprG transports triacylglycerides (TAG) across the inner cell membrane, probably transfering them to lipoprotein LprG in the periplasm. TAG probably regulates lipid metabolism and growth regulation and plays a structural role in the outer membrane. Mutagenesis and molecular modeling suggests TAG (and maybe other lipids) enters the central cavity of the P55 transporter from within the cell inner membrane via clefts on the cytoplasmic face of P55 between TM5-TM8 and TM2-TM11. From there the lipid is probably transferred to the hydrophobic cavity of LprG. The lprG-MHAS_02167/C731_2107 operon complements the vancomycin sensitivity of an M.smegmatis knockout of the same operon. Probably required with LprG for normal surface localization of lipoarabinomannan (LAM). This chain is Triacylglyceride transporter MHAS_02168/C731_2106, found in Mycolicibacterium hassiacum (strain DSM 44199 / CIP 105218 / JCM 12690 / 3849) (Mycobacterium hassiacum).